Reading from the N-terminus, the 330-residue chain is D-lactate dehydrogenase (330 aa).

NAD(+) is bound by residues 156 to 157 (RI), Asp-176, 206 to 207 (VP), 233 to 235 (AAR), and Asp-259. The active site involves Arg-235. Glu-264 is an active-site residue. His-296 serves as the catalytic Proton donor.

This sequence belongs to the D-isomer specific 2-hydroxyacid dehydrogenase family.

It catalyses the reaction (R)-lactate + NAD(+) = pyruvate + NADH + H(+). The sequence is that of D-lactate dehydrogenase (ldhD) from Staphylococcus aureus (strain Mu50 / ATCC 700699).